A 457-amino-acid polypeptide reads, in one-letter code: Transcription termination factor Rho (457 aa).

A disordered region spans residues 1 to 23; sequence MNTTNKQLTEELNNTESNNDHND. The Rho RNA-BD domain maps to 77 to 152; it reads LIVGEGVLEV…LKVNRVNFED (76 aa). Residues 200-205, 212-217, and R243 contribute to the ATP site; these read GKGQRA and RTGKTV.

It belongs to the Rho family. As to quaternary structure, homohexamer. The homohexamer assembles into an open ring structure.

Its function is as follows. Facilitates transcription termination by a mechanism that involves Rho binding to the nascent RNA, activation of Rho's RNA-dependent ATPase activity, and release of the mRNA from the DNA template. This is Transcription termination factor Rho from Rickettsia prowazekii (strain Madrid E).